The chain runs to 356 residues: Histidinol-phosphate aminotransferase (356 aa).

N6-(pyridoxal phosphate)lysine is present on K214.

Belongs to the class-II pyridoxal-phosphate-dependent aminotransferase family. Histidinol-phosphate aminotransferase subfamily. Homodimer. Pyridoxal 5'-phosphate serves as cofactor.

The catalysed reaction is L-histidinol phosphate + 2-oxoglutarate = 3-(imidazol-4-yl)-2-oxopropyl phosphate + L-glutamate. It participates in amino-acid biosynthesis; L-histidine biosynthesis; L-histidine from 5-phospho-alpha-D-ribose 1-diphosphate: step 7/9. This chain is Histidinol-phosphate aminotransferase, found in Escherichia coli O45:K1 (strain S88 / ExPEC).